The chain runs to 70 residues: DNA gyrase inhibitor YacG (70 aa).

Positions 1 to 15 (MPEDKKAAAKVEPLR) are enriched in basic and acidic residues. The disordered stretch occupies residues 1-22 (MPEDKKAAAKVEPLRKTRPCPE). The Zn(2+) site is built by Cys20, Cys23, Cys35, and Cys39.

This sequence belongs to the DNA gyrase inhibitor YacG family. As to quaternary structure, interacts with GyrB. It depends on Zn(2+) as a cofactor.

Its function is as follows. Inhibits all the catalytic activities of DNA gyrase by preventing its interaction with DNA. Acts by binding directly to the C-terminal domain of GyrB, which probably disrupts DNA binding by the gyrase. The chain is DNA gyrase inhibitor YacG from Rhizobium johnstonii (strain DSM 114642 / LMG 32736 / 3841) (Rhizobium leguminosarum bv. viciae).